The primary structure comprises 1056 residues: Contactin-5 (1056 aa).

Residues 1-14 (MKADSSSSSSMSSR) show a composition bias toward low complexity. The interval 1 to 33 (MKADSSSSSSMSSRMRLRNSHGVGSSSQDWSPF) is disordered. The segment covering 22–31 (GVGSSSQDWS) has biased composition (polar residues). Ig-like C2-type domains are found at residues 57-142 (PVFI…IVLS), 154-240 (PFSG…RVLS), 258-343 (PKIE…GHLQ), 348-432 (PQWI…AELK), 438-519 (PMFN…AELT), and 527-622 (PMRV…AELL). 3 cysteine pairs are disulfide-bonded: Cys81–Cys131, Cys175–Cys227, and Cys280–Cys327. 2 N-linked (GlcNAc...) asparagine glycosylation sites follow: Asn96 and Asn119. Asn355 carries N-linked (GlcNAc...) asparagine glycosylation. Disulfide bonds link Cys369–Cys416, Cys459–Cys507, and Cys549–Cys606. 2 N-linked (GlcNAc...) asparagine glycosylation sites follow: Asn489 and Asn496. Fibronectin type-III domains lie at 629–727 (PPGV…TKEA), 732–829 (APAN…SAEG), 834–928 (PPSE…TKKN), and 933–1023 (PPGN…TSSG). A disordered region spans residues 711-736 (GTGDPSPPSRAVRTKEAVPSVAPANV). 4 N-linked (GlcNAc...) asparagine glycosylation sites follow: Asn772, Asn887, Asn945, and Asn958. Residue Asn1035 is the site of GPI-anchor amidated asparagine attachment. Positions 1036–1056 (SPPGLAWTALFLSLMVPSFPL) are cleaved as a propeptide — removed in mature form.

It belongs to the immunoglobulin superfamily. Contactin family.

The protein localises to the cell membrane. Functionally, contactins mediate cell surface interactions during nervous system development. This Danio rerio (Zebrafish) protein is Contactin-5 (cntn5).